The following is a 79-amino-acid chain: Ubiquinol-cytochrome c reductase complex assembly factor 5 (79 aa).

Residues 1 to 20 (MSPYSGSVRRLLDSWPGKKR) lie on the Mitochondrial matrix side of the membrane. The chain crosses the membrane as a helical span at residues 21-43 (FGVYRFLPLFFLLGAGLEFSMIN). The Mitochondrial intermembrane portion of the chain corresponds to 44 to 79 (WTVGETNFYRTFKRRQAKNYVEEQQHLQARAANNTN).

It belongs to the UQCC5 family. In terms of assembly, interacts with respiratory complex III components Uqcc1 and RFeSP; the interactions are probably involved in the assembly and stability of the mitochondrial ubiquinol-cytochrome c reductase complex. Interacts with sloth2; the interaction stabilizes both components. Expressed in the brain.

It is found in the mitochondrion inner membrane. It localises to the mitochondrion. Functionally, required for the assembly and stability of the mitochondrial ubiquinol-cytochrome c reductase complex (complex III (CIII) or cytochrome b-c1 complex), a multisubunit transmembrane complex that is part of the mitochondrial electron transport chain (ETC) which drives oxidative phosphorylation. The protein is Ubiquinol-cytochrome c reductase complex assembly factor 5 of Drosophila melanogaster (Fruit fly).